The chain runs to 183 residues: CyanoP (183 aa).

A signal peptide spans 1-19 (MLQRFFATALAIFVVLLGG). Cys20 carries the N-palmitoyl cysteine lipid modification. Cys20 carries the S-diacylglycerol cysteine lipid modification. Zn(2+)-binding residues include Asp31, Asp34, Asp54, His58, Thr63, Glu87, Asp91, His142, Glu163, and Glu164.

The protein belongs to the PsbP family. CyanoP subfamily. In terms of assembly, monomer. Present in very small amounts in PSII. Zn(2+) serves as cofactor.

Its subcellular location is the cellular thylakoid membrane. In terms of biological role, plays a role in the early stages of photosystem II (PSII) assembly; binds to D2 (psbD) and may facilitate its incorporation into PSII. Present in less than 1% of PSII preparations. The polypeptide is CyanoP (Thermosynechococcus vestitus (strain NIES-2133 / IAM M-273 / BP-1)).